Consider the following 488-residue polypeptide: Aspartyl/glutamyl-tRNA(Asn/Gln) amidotransferase subunit B (488 aa).

It belongs to the GatB/GatE family. GatB subfamily. Heterotrimer of A, B and C subunits.

The catalysed reaction is L-glutamyl-tRNA(Gln) + L-glutamine + ATP + H2O = L-glutaminyl-tRNA(Gln) + L-glutamate + ADP + phosphate + H(+). The enzyme catalyses L-aspartyl-tRNA(Asn) + L-glutamine + ATP + H2O = L-asparaginyl-tRNA(Asn) + L-glutamate + ADP + phosphate + 2 H(+). Functionally, allows the formation of correctly charged Asn-tRNA(Asn) or Gln-tRNA(Gln) through the transamidation of misacylated Asp-tRNA(Asn) or Glu-tRNA(Gln) in organisms which lack either or both of asparaginyl-tRNA or glutaminyl-tRNA synthetases. The reaction takes place in the presence of glutamine and ATP through an activated phospho-Asp-tRNA(Asn) or phospho-Glu-tRNA(Gln). This Neorickettsia sennetsu (strain ATCC VR-367 / Miyayama) (Ehrlichia sennetsu) protein is Aspartyl/glutamyl-tRNA(Asn/Gln) amidotransferase subunit B.